Consider the following 114-residue polypeptide: MTEVKLDFQKQGGLIPAIILDHTSKEVLMLAYLNEEAYQLTRTSGQMWYWSRSRQELWHKGATSGHYQTVKKITADCDLDTLLIEVDQLGAACHTGAKSCFFHPIWDEKDGKTD.

Residue D76 coordinates Mg(2+). Residue C77 coordinates Zn(2+). Mg(2+)-binding residues include D78 and D80. Zn(2+)-binding residues include C93 and C100.

Belongs to the PRA-CH family. In terms of assembly, homodimer. Mg(2+) is required as a cofactor. It depends on Zn(2+) as a cofactor.

It is found in the cytoplasm. The enzyme catalyses 1-(5-phospho-beta-D-ribosyl)-5'-AMP + H2O = 1-(5-phospho-beta-D-ribosyl)-5-[(5-phospho-beta-D-ribosylamino)methylideneamino]imidazole-4-carboxamide. The protein operates within amino-acid biosynthesis; L-histidine biosynthesis; L-histidine from 5-phospho-alpha-D-ribose 1-diphosphate: step 3/9. In terms of biological role, catalyzes the hydrolysis of the adenine ring of phosphoribosyl-AMP. The chain is Phosphoribosyl-AMP cyclohydrolase from Streptococcus sanguinis (strain SK36).